Here is a 376-residue protein sequence, read N- to C-terminus: Erythronate-4-phosphate dehydrogenase (376 aa).

Substrate is bound by residues Ser45 and Thr67. NAD(+) contacts are provided by residues Asp147, 209–211 (ASR), and Asp235. Residue Arg211 is part of the active site. The active site involves Glu240. His257 functions as the Proton donor in the catalytic mechanism. Gly260 lines the NAD(+) pocket. Position 261 (Tyr261) interacts with substrate.

This sequence belongs to the D-isomer specific 2-hydroxyacid dehydrogenase family. PdxB subfamily. As to quaternary structure, homodimer.

Its subcellular location is the cytoplasm. It carries out the reaction 4-phospho-D-erythronate + NAD(+) = (R)-3-hydroxy-2-oxo-4-phosphooxybutanoate + NADH + H(+). Its pathway is cofactor biosynthesis; pyridoxine 5'-phosphate biosynthesis; pyridoxine 5'-phosphate from D-erythrose 4-phosphate: step 2/5. Its function is as follows. Catalyzes the oxidation of erythronate-4-phosphate to 3-hydroxy-2-oxo-4-phosphonooxybutanoate. The chain is Erythronate-4-phosphate dehydrogenase from Aeromonas hydrophila subsp. hydrophila (strain ATCC 7966 / DSM 30187 / BCRC 13018 / CCUG 14551 / JCM 1027 / KCTC 2358 / NCIMB 9240 / NCTC 8049).